The chain runs to 345 residues: MKFTKPNSRQNKPHVEQKTSRRSTNANAVASKNVKKVTEAQPKSVKASTHSVKPTVKNPLVEGEKLQKVLARAGQGSRREIEAMIAENRVSVDGKIATLGDRIDVHAGVKIRIDGHLINLLHAQKEVCRVLMYYKPEGELCTRHDPEGRPTVFDRLPRLTGSRWIAVGRLDINTSGLLLFTTDGELANRLMHPSREVEREYSVRVFGQVDEAMLHRLKKGVQLEDGPANFKEIKFAGGVGMNQWFDVTLMEGRNREVRRLWESQGVQVSRLIRTRYGNISLMKSLPRGGWEEMDLTNVNYLRELVGLPAEVETKLDVTKPRRRAKTGQIRKAVKRYAELNKRYKK.

Residues 1-10 (MKFTKPNSRQ) show a composition bias toward polar residues. The segment at 1 to 60 (MKFTKPNSRQNKPHVEQKTSRRSTNANAVASKNVKKVTEAQPKSVKASTHSVKPTVKNPL) is disordered. The S4 RNA-binding domain occupies 64-136 (EKLQKVLARA…VCRVLMYYKP (73 aa)). Asp-171 (nucleophile) is an active-site residue.

This sequence belongs to the pseudouridine synthase RsuA family.

The catalysed reaction is uridine(2605) in 23S rRNA = pseudouridine(2605) in 23S rRNA. Its function is as follows. Responsible for synthesis of pseudouridine from uracil-2605 in 23S ribosomal RNA. This is Ribosomal large subunit pseudouridine synthase B (rluB) from Pasteurella multocida (strain Pm70).